The sequence spans 96 residues: Protein Vpr (96 aa).

The homooligomerization stretch occupies residues 1–42; sequence MEQAPEDQGPQREPYNDWTLELLEELKNEAVRHFPRIWLHSL. A phosphoserine; by host mark is found at S79, S94, and S96.

Belongs to the HIV-1 VPR protein family. Homooligomer, may form homodimer. Interacts with p6-gag region of the Pr55 Gag precursor protein through a (Leu-X-X)4 motif near the C-terminus of the P6gag protein. Interacts with host UNG. May interact with host RAD23A/HHR23A. Interacts with host VPRBP/DCAF1, leading to hijack the CUL4A-RBX1-DDB1-DCAF1/VPRBP complex, mediating ubiquitination of host proteins such as TERT and ZGPAT and arrest of the cell cycle in G2 phase. In terms of processing, phosphorylated on several residues by host. These phosphorylations regulate VPR activity for the nuclear import of the HIV-1 pre-integration complex.

Its subcellular location is the virion. The protein localises to the host nucleus. It localises to the host extracellular space. Functionally, during virus replication, may deplete host UNG protein, and incude G2-M cell cycle arrest. Acts by targeting specific host proteins for degradation by the 26S proteasome, through association with the cellular CUL4A-DDB1 E3 ligase complex by direct interaction with host VPRPB/DCAF-1. Cell cycle arrest reportedly occurs within hours of infection and is not blocked by antiviral agents, suggesting that it is initiated by the VPR carried into the virion. Additionally, VPR induces apoptosis in a cell cycle dependent manner suggesting that these two effects are mechanistically linked. Detected in the serum and cerebrospinal fluid of AIDS patient, VPR may also induce cell death to bystander cells. During virus entry, plays a role in the transport of the viral pre-integration (PIC) complex to the host nucleus. This function is crucial for viral infection of non-dividing macrophages. May act directly at the nuclear pore complex, by binding nucleoporins phenylalanine-glycine (FG)-repeat regions. This chain is Protein Vpr, found in Human immunodeficiency virus type 1 group M subtype B (strain 89.6) (HIV-1).